Consider the following 151-residue polypeptide: MSTPDNRSVNFFSLFRRGQHYSKTWPLEKRLAPVFVENRVIKMTRYAIRFMPPIAVFTLCWQIALGGLLGPAVATALFALSLPMQGLWWLGKRSVTPLPPAILNWFYEVRGKLQESGQVLAPVEGKPDYQALADTLKRAFKQLDKTFLDDL.

2 helical membrane-spanning segments follow: residues 46–65 (YAIR…QIAL) and 69–91 (LGPA…WWLG).

The protein belongs to the UPF0208 family.

The protein localises to the cell inner membrane. The sequence is that of UPF0208 membrane protein YfbV from Shigella flexneri serotype 5b (strain 8401).